The primary structure comprises 356 residues: tRNA N6-adenosine threonylcarbamoyltransferase (356 aa).

Residues histidine 115 and histidine 119 each coordinate Fe cation. Substrate is bound by residues 138–142, aspartate 171, glycine 184, and asparagine 283; that span reads LVSGG. Residue aspartate 311 participates in Fe cation binding.

The protein belongs to the KAE1 / TsaD family. Requires Fe(2+) as cofactor.

It localises to the cytoplasm. It carries out the reaction L-threonylcarbamoyladenylate + adenosine(37) in tRNA = N(6)-L-threonylcarbamoyladenosine(37) in tRNA + AMP + H(+). Functionally, required for the formation of a threonylcarbamoyl group on adenosine at position 37 (t(6)A37) in tRNAs that read codons beginning with adenine. Is involved in the transfer of the threonylcarbamoyl moiety of threonylcarbamoyl-AMP (TC-AMP) to the N6 group of A37, together with TsaE and TsaB. TsaD likely plays a direct catalytic role in this reaction. This is tRNA N6-adenosine threonylcarbamoyltransferase from Prochlorococcus marinus (strain MIT 9515).